A 136-amino-acid polypeptide reads, in one-letter code: Small ribosomal subunit protein uS8c (136 aa).

It belongs to the universal ribosomal protein uS8 family. In terms of assembly, part of the 30S ribosomal subunit.

It localises to the plastid. Its function is as follows. One of the primary rRNA binding proteins, it binds directly to 16S rRNA central domain where it helps coordinate assembly of the platform of the 30S subunit. This is Small ribosomal subunit protein uS8c (rps8) from Helicosporidium sp. subsp. Simulium jonesii (Green alga).